Reading from the N-terminus, the 434-residue chain is MFS-type transporter pynF (434 aa).

The span at 1–13 shows a compositional bias: basic and acidic residues; the sequence is MSHDQRSPSEEVS. Residues 1–34 are disordered; it reads MSHDQRSPSEEVSRTALSKPASESTIVGDGHHPL. 12 helical membrane passes run 44–64, 84–104, 109–129, 138–158, 171–191, 203–223, 249–269, 280–302, 311–331, 334–354, 375–395, and 402–422; these read WLVV…LNAF, IAWI…VVGP, VGAT…LMLT, LILA…YPTI, IALG…TEII, TVRA…VLII, LLFS…FFYL, VTGA…VLTG, FNVI…LHKI, SGAI…LISL, LMMG…GALL, and WYGF…VTIL.

The protein belongs to the major facilitator superfamily. Monocarboxylate porter (TC 2.A.1.13) family.

It is found in the cell membrane. In terms of biological role, MFS-type transporter; part of the gene cluster that mediates the biosynthesis of pyranonigrins, a family of antioxidative compounds. May be involved in the secretion of pyranonigrins. The protein is MFS-type transporter pynF of Aspergillus niger (strain ATCC MYA-4892 / CBS 513.88 / FGSC A1513).